A 364-amino-acid polypeptide reads, in one-letter code: Fructose-bisphosphate aldolase, non-muscle type (364 aa).

Residues arginine 56 and lysine 147 each contribute to the substrate site. Lysine 230 serves as the catalytic Schiff-base intermediate with dihydroxyacetone-P.

Belongs to the class I fructose-bisphosphate aldolase family. In terms of assembly, homotetramer. Expressed mainly in the liver and also in brain and other tissues, except for the heart muscle.

The enzyme catalyses beta-D-fructose 1,6-bisphosphate = D-glyceraldehyde 3-phosphate + dihydroxyacetone phosphate. The protein operates within carbohydrate degradation; glycolysis; D-glyceraldehyde 3-phosphate and glycerone phosphate from D-glucose: step 4/4. The polypeptide is Fructose-bisphosphate aldolase, non-muscle type (Lethenteron camtschaticum (Japanese lamprey)).